A 391-amino-acid chain; its full sequence is Lipid-A-disaccharide synthase (391 aa).

This sequence belongs to the LpxB family.

The enzyme catalyses a lipid X + a UDP-2-N,3-O-bis[(3R)-3-hydroxyacyl]-alpha-D-glucosamine = a lipid A disaccharide + UDP + H(+). Its pathway is bacterial outer membrane biogenesis; LPS lipid A biosynthesis. In terms of biological role, condensation of UDP-2,3-diacylglucosamine and 2,3-diacylglucosamine-1-phosphate to form lipid A disaccharide, a precursor of lipid A, a phosphorylated glycolipid that anchors the lipopolysaccharide to the outer membrane of the cell. The sequence is that of Lipid-A-disaccharide synthase from Aromatoleum aromaticum (strain DSM 19018 / LMG 30748 / EbN1) (Azoarcus sp. (strain EbN1)).